Here is a 523-residue protein sequence, read N- to C-terminus: NEDD8-activating enzyme E1 regulatory subunit AXL (523 aa).

It belongs to the ubiquitin-activating E1 family. ULA1 subfamily. As to quaternary structure, heterodimer of ECR1 and AXL1. The complex binds to RUB1/NEDD8 and RCE1.

It is found in the nucleus. Its pathway is protein modification; protein neddylation. Regulatory subunit of the dimeric ECR1-AXL1 E1 enzyme. E1 activates RUB1/NEDD8 by first adenylating its C-terminal glycine residue with ATP, thereafter linking this residue to the side chain of the catalytic cysteine, yielding a RUB1-ECR1 thioester and free AMP. E1 finally transfers RUB1 to the catalytic cysteine of RCE1. May function redundantly with AXR1 in the RUB conjugating pathway. Seems not to be functionally equivalent to AXR1 in vivo. This Arabidopsis thaliana (Mouse-ear cress) protein is NEDD8-activating enzyme E1 regulatory subunit AXL.